A 160-amino-acid chain; its full sequence is Protein-export protein SecB (160 aa).

It belongs to the SecB family. Homotetramer, a dimer of dimers. One homotetramer interacts with 1 SecA dimer.

The protein localises to the cytoplasm. One of the proteins required for the normal export of preproteins out of the cell cytoplasm. It is a molecular chaperone that binds to a subset of precursor proteins, maintaining them in a translocation-competent state. It also specifically binds to its receptor SecA. The chain is Protein-export protein SecB from Agrobacterium fabrum (strain C58 / ATCC 33970) (Agrobacterium tumefaciens (strain C58)).